A 150-amino-acid chain; its full sequence is Protein U1 (150 aa).

The protein belongs to the nanovirus U1 protein family.

The chain is Protein U1 (DNA-U1) from Astragalus sinicus (Chinese milk vetch).